The sequence spans 437 residues: Elongation factor 1-alpha (437 aa).

Residues 4–229 enclose the tr-type G domain; it reads KPHMNLVVIG…DQLQPPAKPV (226 aa). The G1 stretch occupies residues 13-20; it reads GHVDHGKS. 13–20 serves as a coordination point for GTP; sequence GHVDHGKS. Position 20 (Ser20) interacts with Mg(2+). The interval 69–73 is G2; it reads GITID. Residues 90–93 form a G3 region; sequence DAPG. Residues 90–94 and 152–155 each bind GTP; these read DAPGH and NKMD. The tract at residues 152–155 is G4; the sequence is NKMD. Positions 193–195 are G5; sequence SAW.

Belongs to the TRAFAC class translation factor GTPase superfamily. Classic translation factor GTPase family. EF-Tu/EF-1A subfamily.

The protein resides in the cytoplasm. The enzyme catalyses GTP + H2O = GDP + phosphate + H(+). Its function is as follows. GTP hydrolase that promotes the GTP-dependent binding of aminoacyl-tRNA to the A-site of ribosomes during protein biosynthesis. The protein is Elongation factor 1-alpha of Aeropyrum pernix (strain ATCC 700893 / DSM 11879 / JCM 9820 / NBRC 100138 / K1).